The sequence spans 219 residues: Probable nicotinate-nucleotide adenylyltransferase (219 aa).

It belongs to the NadD family.

It catalyses the reaction nicotinate beta-D-ribonucleotide + ATP + H(+) = deamido-NAD(+) + diphosphate. It functions in the pathway cofactor biosynthesis; NAD(+) biosynthesis; deamido-NAD(+) from nicotinate D-ribonucleotide: step 1/1. Its function is as follows. Catalyzes the reversible adenylation of nicotinate mononucleotide (NaMN) to nicotinic acid adenine dinucleotide (NaAD). The polypeptide is Probable nicotinate-nucleotide adenylyltransferase (Erythrobacter litoralis (strain HTCC2594)).